A 690-amino-acid polypeptide reads, in one-letter code: CREB-H transcription factor homolog let-607 (690 aa).

Disordered regions lie at residues 87–118, 166–192, and 205–253; these read NDNC…SSGG, SAVH…SNGL, and PASI…KYPP. 3 stretches are compositionally biased toward low complexity: residues 100 to 116, 170 to 181, and 213 to 236; these read SLPI…YHSS, QNQQQQQRRLNQ, and PSSS…SSST. The bZIP domain maps to 284 to 347; that stretch reads DLKRIRRKIR…QSVISQLKKL (64 aa). The tract at residues 286–321 is basic motif; the sequence is KRIRRKIRNKRSAQTSRKRKQDYIEQLEDRVSESTK. Residues 295 to 350 adopt a coiled-coil conformation; that stretch reads KRSAQTSRKRKQDYIEQLEDRVSESTKENQALKQQIERLSSENQSVISQLKKLQAQ. Residues 326 to 333 form a leucine-zipper region; it reads LKQQIERL. Residues 451–464 show a composition bias toward polar residues; it reads HNNSKYPASGNQNH. Disordered regions lie at residues 451-495 and 509-536; these read HNNS…SMYR and GARK…ATSP. Composition is skewed to low complexity over residues 480 to 492 and 514 to 535; these read QPKQ…HQPS and SSTS…SATS.

This sequence belongs to the bZIP family.

The protein localises to the nucleus. Its function is as follows. Probable transcription factor, required during migration of the gonadal distal tip cells (DTC). Probably regulates cell adhesion of DTCs via modulation of expression of genes involved in integrin-mediated adhesion, including tln-1, src-1, and integrin pat-2. Modulates expression of genes involved in protein trafficking during embryogenesis, including emo-1, sec-61, calu-1, sec-24.1, enpl-1, sar-1 and tfg-1. This is CREB-H transcription factor homolog let-607 from Caenorhabditis elegans.